The following is a 338-amino-acid chain: Large ribosomal subunit protein uL10 (338 aa).

Residues 302–338 (IAAQPQPAEEAEEKVEEEEEEEKEEEEALAGLGALFG) are disordered. A compositionally biased stretch (acidic residues) spans 310–329 (EEAEEKVEEEEEEEKEEEEA).

Belongs to the universal ribosomal protein uL10 family. As to quaternary structure, part of the 50S ribosomal subunit. Forms part of the ribosomal stalk which helps the ribosome interact with GTP-bound translation factors. Forms a heptameric L10(L12)2(L12)2(L12)2 complex, where L10 forms an elongated spine to which the L12 dimers bind in a sequential fashion.

In terms of biological role, forms part of the ribosomal stalk, playing a central role in the interaction of the ribosome with GTP-bound translation factors. The protein is Large ribosomal subunit protein uL10 of Thermococcus sibiricus (strain DSM 12597 / MM 739).